Consider the following 181-residue polypeptide: Large ribosomal subunit protein bL17 (181 aa).

Residues 141–159 (KAASATAESAPVATANDAA) are compositionally biased toward low complexity. Residues 141 to 181 (KAASATAESAPVATANDAAPAEEAEVQGVKDPAEDCEAKAD) are disordered. Residues 171-181 (DPAEDCEAKAD) are compositionally biased toward basic and acidic residues.

This sequence belongs to the bacterial ribosomal protein bL17 family. As to quaternary structure, part of the 50S ribosomal subunit. Contacts protein L32.

The protein is Large ribosomal subunit protein bL17 of Geotalea daltonii (strain DSM 22248 / JCM 15807 / FRC-32) (Geobacter daltonii).